The sequence spans 625 residues: Coagulation factor XI (625 aa).

The first 18 residues, 1 to 18, serve as a signal peptide directing secretion; the sequence is MTLLYQMVHFALFASVAG. Apple domains follow at residues 20-103, 110-193, 200-283, and 291-374; these read CVTT…SKQC, CSKD…LKSC, CIRD…LQHC, and CHSS…LRLC. Intrachain disulfides connect Cys20-Cys103, Cys46-Cys76, Cys50-Cys56, Cys110-Cys193, Cys136-Cys165, Cys140-Cys146, Cys200-Cys283, Cys226-Cys255, Cys230-Cys236, Cys291-Cys374, Cys317-Cys346, Cys321-Cys327, Cys380-Cys500, Cys416-Cys432, Cys514-Cys581, Cys545-Cys560, and Cys571-Cys599. 2 N-linked (GlcNAc...) asparagine glycosylation sites follow: Asn90 and Asn126. In terms of domain architecture, Peptidase S1 spans 388-623; it reads IVGGTQSVHG…YVDWILEKTQ (236 aa). The Charge relay system role is filled by His431. A glycan (N-linked (GlcNAc...) asparagine) is linked at Asn450. Asp480 acts as the Charge relay system in catalysis. N-linked (GlcNAc...) asparagine glycosylation occurs at Asn491. 547–550 is a heparin binding site; sequence AGYR. The active-site Charge relay system is the Ser575.

This sequence belongs to the peptidase S1 family. Plasma kallikrein subfamily. Homodimer; disulfide-linked. After activation the heavy and light chains are also linked by a disulfide bond. Interacts (activated) with F9 (inactive and activated) in calcium-dependent manner. Forms a heterodimer with SERPINA5. Activated by factor XIIa (or XII), which cleaves each polypeptide after Arg-387 into the light chain, which contains the active site, and the heavy chain, which associates with high molecular weight (HMW) kininogen. Activated by F12 (activated); the presence of negatively charged surfaces accelerates activation. Activated by F2 (thrombin); the presence of negatively charged surfaces, such as polyphosphate and dextran sulfate, strongly accelerates activation. Autoactivated; the presence of negatively charged surfaces, such as polyphosphate and dextran sulfate, accelerates autoactivation and autolysis. Post-translationally, N-glycosylated on both chains. N-glycosylated sites mainly consist of nonfucosylated sialylated biantennary (in high abundance) and/or triantennary (in low abundance) complex structures.

Its subcellular location is the secreted. It catalyses the reaction Selective cleavage of Arg-|-Ala and Arg-|-Val bonds in factor IX to form factor IXa.. With respect to regulation, inhibited by SERPINA5. Functionally, factor XI triggers the middle phase of the intrinsic pathway of blood coagulation by activating factor IX. This is Coagulation factor XI (F11) from Bos taurus (Bovine).